The sequence spans 351 residues: uncharacterized protein (351 aa).

The N-terminal stretch at 1 to 32 (MKNKKRVFIASSLSCVLLLLSAANTEANSANK) is a signal peptide. The disordered stretch occupies residues 26-74 (EANSANKDSQDQTKKEHVDKAQQKEKRNVNDKDKNTPGPDDIGKNGKVT). Over residues 33 to 60 (DSQDQTKKEHVDKAQQKEKRNVNDKDKN) the composition is skewed to basic and acidic residues.

This sequence belongs to the aerolysin family.

This is an uncharacterized protein from Staphylococcus aureus (strain MRSA252).